The sequence spans 547 residues: Chaperonin GroEL (547 aa).

ATP contacts are provided by residues T30 to P33, K51, D87 to T91, G415, and D496. Positions K527 to F547 are disordered. Residues P534–F547 show a composition bias toward gly residues.

It belongs to the chaperonin (HSP60) family. In terms of assembly, forms a cylinder of 14 subunits composed of two heptameric rings stacked back-to-back. Interacts with the co-chaperonin GroES.

The protein localises to the cytoplasm. It catalyses the reaction ATP + H2O + a folded polypeptide = ADP + phosphate + an unfolded polypeptide.. Together with its co-chaperonin GroES, plays an essential role in assisting protein folding. The GroEL-GroES system forms a nano-cage that allows encapsulation of the non-native substrate proteins and provides a physical environment optimized to promote and accelerate protein folding. The polypeptide is Chaperonin GroEL (Methylocella silvestris (strain DSM 15510 / CIP 108128 / LMG 27833 / NCIMB 13906 / BL2)).